The chain runs to 79 residues: MAHKQIYYSDKYFDEHYEYRHVMLPRELSKQVPKTHLMSEEEWRRLGVQQSLGWVHYMIHEPEPHILLFRRPLPKEQQK.

Residue Lys4 is modified to N6-acetyllysine.

The protein belongs to the CKS family. Forms a homohexamer that can probably bind six kinase subunits.

Binds to the catalytic subunit of the cyclin dependent kinases and is essential for their biological function. This Mus musculus (Mouse) protein is Cyclin-dependent kinases regulatory subunit 2 (Cks2).